We begin with the raw amino-acid sequence, 287 residues long: Probable F-box protein At5g04010 (287 aa).

The 52-residue stretch at 50–101 (PSPPSWEILCLVGPYMDPESLAVASCVSTTWSKCFSSEDLWKSLPATRHSIF) folds into the F-box; degenerate domain.

The protein is Probable F-box protein At5g04010 (NSFBx) of Arabidopsis thaliana (Mouse-ear cress).